We begin with the raw amino-acid sequence, 259 residues long: 5'-nucleotidase SurE (259 aa).

4 residues coordinate a divalent metal cation: D8, D9, S40, and N92.

Belongs to the SurE nucleotidase family. Requires a divalent metal cation as cofactor.

Its subcellular location is the cytoplasm. It catalyses the reaction a ribonucleoside 5'-phosphate + H2O = a ribonucleoside + phosphate. Functionally, nucleotidase that shows phosphatase activity on nucleoside 5'-monophosphates. This is 5'-nucleotidase SurE from Stenotrophomonas maltophilia (strain K279a).